The chain runs to 340 residues: Transcription initiation factor IIB (340 aa).

Residues 16–49 (VKMICSECREDPPNLVEEFSSGDTVCGSCGLVLG) form a TFIIB-type zinc finger. Zn(2+) is bound by residues C20, C23, C41, and C44. A run of 2 repeats spans residues 128-204 (MCDA…TLQR) and 239-315 (FCNR…LLHA).

It belongs to the TFIIB family. In terms of assembly, associates with TFIID-IIA (DA complex) to form TFIID-IIA-IIB (DAB-complex) which is then recognized by polymerase II.

The protein localises to the nucleus. General factor that plays a major role in the activation of eukaryotic genes transcribed by RNA polymerase II. This chain is Transcription initiation factor IIB (sua7), found in Schizosaccharomyces pombe (strain 972 / ATCC 24843) (Fission yeast).